We begin with the raw amino-acid sequence, 125 residues long: 14 kDa phosphohistidine phosphatase (125 aa).

Alanine 2 bears the N-acetylalanine mark. Lysine 21 is a substrate binding site. Histidine 53 serves as the catalytic Proton acceptor. 94 to 96 contacts substrate; it reads SMG.

As to quaternary structure, monomer.

It is found in the cytoplasm. The enzyme catalyses N(pros)-phospho-L-histidyl-[protein] + H2O = L-histidyl-[protein] + phosphate. It catalyses the reaction N(tele)-phospho-L-histidyl-[protein] + H2O = L-histidyl-[protein] + phosphate. Exhibits phosphohistidine phosphatase activity. Functionally, may have a significant involvement in neuronal signaling. This Oryctolagus cuniculus (Rabbit) protein is 14 kDa phosphohistidine phosphatase (PHPT1).